The following is a 252-amino-acid chain: Transcriptional regulatory protein HptR (252 aa).

The 116-residue stretch at 3–118 folds into the Response regulatory domain; it reads KVVICDDERI…QLEVILGRLV (116 aa). Asp55 carries the 4-aspartylphosphate modification. Positions 153–250 constitute an HTH araC/xylS-type domain; the sequence is NQIVDQIKQS…QMSPSDYCKQ (98 aa). 2 consecutive DNA-binding regions (H-T-H motif) follow at residues 170 to 191 and 217 to 240; these read SDLI…KDHV and HYEI…KKYL.

Phosphorylated by HptS.

It localises to the cytoplasm. Its function is as follows. Member of the two-component regulatory system HptS/HptR that regulates genes involved in hexose phosphate transport system in response to changes in extracellular phosphate sources. Activates uhpT expression to facilitate glucose-6-phosphate/G6P utilization by directly binding to its promoter. Antagonizes CcpA-dependent transcription of a subset of CcpA-regulated genes involved in antibiotic susceptibility. In Staphylococcus aureus (strain Mu50 / ATCC 700699), this protein is Transcriptional regulatory protein HptR (hptR).